The primary structure comprises 153 residues: Lectin-like protein EP153R (153 aa).

Residues 1–30 (MYFKKKYIGLIDKNCEKKILDDSSTIKICY) lie on the Cytoplasmic side of the membrane. The helical transmembrane segment at 31–51 (ILIGILIGTNMITLIYNFIFW) threads the bilayer. The Extracellular segment spans residues 52-153 (DNYIKCYRNN…YTDLLFICGK (102 aa)). An intrachain disulfide couples C67 to C78. N-linked (GlcNAc...) asparagine; by host glycans are attached at residues N83, N89, N101, N107, N113, N120, N127, and N143. C97 and C151 are disulfide-bonded.

This sequence belongs to the asfivirus lectin-like protein family. Homodimer.

The protein resides in the host endoplasmic reticulum membrane. Down-regulates MHC-I expression by impairing the appropriate configuration or presentation into the plasma membrane of the latter. Participates in viral hemadsorption, which may help viral spread. Reduces the transactivating activity of host TP53, thus inhibiting apoptosis. Non-essential for virus growth in swine macrophage cell cultures. This is Lectin-like protein EP153R from African swine fever virus (strain Badajoz 1971 Vero-adapted) (Ba71V).